A 156-amino-acid polypeptide reads, in one-letter code: ATP synthase subunit b (156 aa).

Residues 11-31 (AIAFVLFVLFCMKYVWPPLMA) traverse the membrane as a helical segment.

Belongs to the ATPase B chain family. F-type ATPases have 2 components, F(1) - the catalytic core - and F(0) - the membrane proton channel. F(1) has five subunits: alpha(3), beta(3), gamma(1), delta(1), epsilon(1). F(0) has three main subunits: a(1), b(2) and c(10-14). The alpha and beta chains form an alternating ring which encloses part of the gamma chain. F(1) is attached to F(0) by a central stalk formed by the gamma and epsilon chains, while a peripheral stalk is formed by the delta and b chains.

The protein resides in the cell inner membrane. In terms of biological role, f(1)F(0) ATP synthase produces ATP from ADP in the presence of a proton or sodium gradient. F-type ATPases consist of two structural domains, F(1) containing the extramembraneous catalytic core and F(0) containing the membrane proton channel, linked together by a central stalk and a peripheral stalk. During catalysis, ATP synthesis in the catalytic domain of F(1) is coupled via a rotary mechanism of the central stalk subunits to proton translocation. Its function is as follows. Component of the F(0) channel, it forms part of the peripheral stalk, linking F(1) to F(0). This is ATP synthase subunit b from Sodalis glossinidius (strain morsitans).